A 220-amino-acid polypeptide reads, in one-letter code: Iron-sulfur cluster repair protein YtfE (220 aa).

Belongs to the RIC family. YtfE subfamily. As to quaternary structure, homodimer.

The protein localises to the cytoplasm. Functionally, di-iron-containing protein involved in the repair of iron-sulfur clusters damaged by oxidative and nitrosative stress conditions. The chain is Iron-sulfur cluster repair protein YtfE from Enterobacter sp. (strain 638).